The primary structure comprises 780 residues: RNA-binding protein Pasilla (780 aa).

Disordered regions lie at residues 31 to 50, 76 to 113, and 150 to 190; these read LQHQ…QQLE, QPRH…SSSI, and QIES…ATAS. Composition is skewed to low complexity over residues 79 to 91, 99 to 113, and 176 to 190; these read HSTT…STHS, SSNS…SSSI, and PNGT…ATAS. 3 consecutive KH domains span residues 273–340, 366–432, and 691–758; these read TYHM…MEFI, DKQV…CKMI, and KDSK…QYLI. Positions 674–693 are disordered; that stretch reads AQLGGLSKSPTPGDLSSKDS. The segment at 686-776 is required for RNA binding; the sequence is GDLSSKDSKN…TKRARQIPLT (91 aa).

As to expression, expressed in the central nervous system in mushroom body neurons (at protein level).

Its subcellular location is the nucleus. It localises to the cytoplasm. Functionally, functions to regulate alternative splicing in neurons by binding pre-mRNA in a sequence-specific manner to activate exon inclusion. Plays a role in long-term memory formation by processing the unspliced Orb2-isoform A (Orb2A) mRNA and thereby controlling Orb2A protein abundance. This is RNA-binding protein Pasilla from Drosophila melanogaster (Fruit fly).